We begin with the raw amino-acid sequence, 669 residues long: Cysteine-rich receptor-like protein kinase 10 (669 aa).

An N-terminal signal peptide occupies residues 1 to 34 (MRRNTDQESPIMSYYSSFFFLFLFSFLTSFRVSA). The Extracellular portion of the chain corresponds to 35–285 (QDPTYVYHTC…PRSGKDGNSK (251 aa)). Gnk2-homologous domains lie at 38 to 142 (TYVY…NQNI) and 148 to 252 (TTGG…IYAF). N-linked (GlcNAc...) asparagine glycosylation is found at Asn49, Asn53, Asn71, and Asn80. Intrachain disulfides connect Cys96–Cys105 and Cys108–Cys133. N-linked (GlcNAc...) asparagine glycosylation is found at Asn114, Asn159, Asn185, and Asn196. 2 disulfide bridges follow: Cys209/Cys218 and Cys221/Cys243. Positions 260–274 (PPPPPPSISTPPVSA) are enriched in pro residues. The tract at residues 260 to 280 (PPPPPPSISTPPVSAPPRSGK) is disordered. Residues 286-306 (VLVIAIVVPIIVAVLLFIAGY) form a helical membrane-spanning segment. At 307 to 669 (CFLTRRARKS…DASITDIHPR (363 aa)) the chain is on the cytoplasmic side. Residues 348-634 (FVESNKIGQG…TLPVPRQPGL (287 aa)) enclose the Protein kinase domain. ATP contacts are provided by residues 354 to 362 (IGQGGFGEV) and Lys376. Phosphotyrosine is present on Tyr421. Asp473 serves as the catalytic Proton acceptor. Ser477 carries the phosphoserine modification. Thr513 is modified (phosphothreonine). Phosphotyrosine is present on Tyr521.

Belongs to the protein kinase superfamily. Ser/Thr protein kinase family. CRK subfamily. As to quaternary structure, interacts with CRKIP1 (KAPP), CRKIP2 and CRKIP3, three kinase-associated type 2C proteins.

The protein resides in the membrane. The enzyme catalyses L-seryl-[protein] + ATP = O-phospho-L-seryl-[protein] + ADP + H(+). The catalysed reaction is L-threonyl-[protein] + ATP = O-phospho-L-threonyl-[protein] + ADP + H(+). The chain is Cysteine-rich receptor-like protein kinase 10 (CRK10) from Arabidopsis thaliana (Mouse-ear cress).